A 173-amino-acid polypeptide reads, in one-letter code: Macro domain-containing protein in gbd 3'region (173 aa).

The region spanning 1 to 173 (MSGEHLQVVH…NYRLYRERLS (173 aa)) is the Macro domain.

It belongs to the MacroD-type family.

The sequence is that of Macro domain-containing protein in gbd 3'region from Cupriavidus necator (Alcaligenes eutrophus).